Reading from the N-terminus, the 429-residue chain is Phosphoribosylamine--glycine ligase (429 aa).

The 208-residue stretch at 109–316 (KDFLARHQIP…LVDLCLAAID (208 aa)) folds into the ATP-grasp domain. ATP is bound at residue 135–196 (VREQGAPIVV…EEFLDGEEAS (62 aa)). The segment at 212–235 (SQDHKRVGDKDTGPNTGGMGAYSP) is disordered. Basic and acidic residues predominate over residues 213 to 223 (QDHKRVGDKDT). Mg(2+) contacts are provided by E286 and N288.

The protein belongs to the GARS family. Requires Mg(2+) as cofactor. It depends on Mn(2+) as a cofactor.

The enzyme catalyses 5-phospho-beta-D-ribosylamine + glycine + ATP = N(1)-(5-phospho-beta-D-ribosyl)glycinamide + ADP + phosphate + H(+). It participates in purine metabolism; IMP biosynthesis via de novo pathway; N(1)-(5-phospho-D-ribosyl)glycinamide from 5-phospho-alpha-D-ribose 1-diphosphate: step 2/2. This chain is Phosphoribosylamine--glycine ligase, found in Vibrio parahaemolyticus serotype O3:K6 (strain RIMD 2210633).